A 489-amino-acid chain; its full sequence is EGF-like domain-containing protein 2 (489 aa).

The first 23 residues, 1 to 23, serve as a signal peptide directing secretion; that stretch reads MMQTLLRGLCVVVLFWGYIKASA. Residues 73–109 form the EGF-like domain; the sequence is PATLCDPPCLNGGQCFEPTADTYMCMCSEAFYGSQCE. Intrachain disulfides connect C77–C87, C81–C97, and C99–C108. The region spanning 116-370 is the ZP domain; the sequence is ECSGDQITIN…GSCPTPAPPA (255 aa). A glycan (N-linked (GlcNAc...) asparagine) is linked at N229. Disordered stretches follow at residues 358-389 and 404-425; these read CEPG…AASD and RSNE…QNAD. Residues 363 to 374 show a composition bias toward pro residues; the sequence is CPTPAPPAPVQP. Residues 404–420 are compositionally biased toward basic and acidic residues; it reads RSNEKLRLPHNKSDKKS. Residues N414 and N479 are each glycosylated (N-linked (GlcNAc...) asparagine).

Component of the acid-insoluble organic matrix of calcified layers of the shell (at protein level).

The protein resides in the secreted. This is EGF-like domain-containing protein 2 from Lottia gigantea (Giant owl limpet).